The sequence spans 440 residues: Cell division protein FtsA (440 aa).

It belongs to the FtsA/MreB family. In terms of assembly, self-interacts. Interacts with FtsZ.

It is found in the cell membrane. Cell division protein that is involved in the assembly of the Z ring. May serve as a membrane anchor for the Z ring. The polypeptide is Cell division protein FtsA (Enterococcus faecalis (strain ATCC 700802 / V583)).